The following is a 326-amino-acid chain: Malate dehydrogenase (326 aa).

NAD(+) is bound at residue 12 to 18; it reads GGTGQIA. Arg-93 and Arg-99 together coordinate substrate. Residues Asn-106, Gln-113, and 130–132 contribute to the NAD(+) site; that span reads VGN. Positions 132 and 163 each coordinate substrate. His-188 serves as the catalytic Proton acceptor.

The protein belongs to the LDH/MDH superfamily. MDH type 2 family.

The catalysed reaction is (S)-malate + NAD(+) = oxaloacetate + NADH + H(+). Functionally, catalyzes the reversible oxidation of malate to oxaloacetate. In Chlamydia trachomatis serovar D (strain ATCC VR-885 / DSM 19411 / UW-3/Cx), this protein is Malate dehydrogenase.